We begin with the raw amino-acid sequence, 166 residues long: Putative protein PTGES3L (166 aa).

In terms of domain architecture, CS spans Arg-46–Asp-154. The segment at Ser-142–Asn-166 is disordered. Positions Asp-151–Asn-166 are enriched in acidic residues.

Belongs to the p23/wos2 family.

This Homo sapiens (Human) protein is Putative protein PTGES3L.